Reading from the N-terminus, the 502-residue chain is 4,4'-diaponeurosporene oxygenase (502 aa).

8 to 20 (IIGGGLGGISAAI) serves as a coordination point for FAD.

The protein belongs to the carotenoid/retinoid oxidoreductase family. CrtP subfamily. It depends on FAD as a cofactor.

The catalysed reaction is all-trans-4,4'-diaponeurosporene + 2 AH2 + 2 O2 = 4,4'-diaponeurosporenal + 2 A + 3 H2O. It functions in the pathway carotenoid biosynthesis; staphyloxanthin biosynthesis; staphyloxanthin from farnesyl diphosphate: step 3/5. In terms of biological role, involved in the biosynthesis of the yellow-orange carotenoid staphyloxanthin, which plays a role in the virulence via its protective function against oxidative stress. Catalyzes the oxidation of the terminal methyl side group of 4,4'-diaponeurosporene to form 4,4'-diaponeurosporen-4-al. The polypeptide is 4,4'-diaponeurosporene oxygenase (Staphylococcus haemolyticus (strain JCSC1435)).